Reading from the N-terminus, the 379-residue chain is tRNA-specific 2-thiouridylase MnmA (379 aa).

ATP-binding positions include 6 to 13 (AMSGGVDS) and Leu32. The Nucleophile role is filled by Cys101. A disulfide bridge connects residues Cys101 and Cys199. ATP is bound at residue Gly125. Residues 148 to 150 (KDQ) form an interaction with tRNA region. The Cysteine persulfide intermediate role is filled by Cys199.

This sequence belongs to the MnmA/TRMU family.

Its subcellular location is the cytoplasm. It catalyses the reaction S-sulfanyl-L-cysteinyl-[protein] + uridine(34) in tRNA + AH2 + ATP = 2-thiouridine(34) in tRNA + L-cysteinyl-[protein] + A + AMP + diphosphate + H(+). Its function is as follows. Catalyzes the 2-thiolation of uridine at the wobble position (U34) of tRNA, leading to the formation of s(2)U34. In Arthrobacter sp. (strain FB24), this protein is tRNA-specific 2-thiouridylase MnmA.